The chain runs to 750 residues: MFVLLMLALVMLFIVQSSTNVIALWTNNVFQFSLILIPLVTLLAGSITADIFIEGYNNGIELFLFSKPISRDRILLIKLLVLLMYLSIVAVLSTAVVSLGYFTRNEIESYLDDLALSIFVGTILNGIIFSAVTIMLATRFSNIQSLIILLLFVSLFSFSSPIARLIFDTPAKTLSQQGYSVRQINGIAHSESPNVERKIYVSVKKRRLTGVDREEKELWKSDEQAALRGRNLYEEAQRTSSYINSFYTNIGYLFGSLYRLGALADENNFDASVATQNTKIRFGKLVDLDKSTDIIGYRTKDRFGRFFRFHLRFPTLNFKQSLSNSGVFFINKRGLVKATFSAGDDAFKRDPKIMQKVFDTFLESFSWFLDKKINRRIARIYAESDNKGSPFPKEGDDENTKGDDNSSEKTDTVSVSTKLKTTADQSESTQMSSESTATGISSDPQSQGKMNNKSEEQKKKEKELTWQIYRDIKFLNSIYFLQVNNERLWDNVAFLNKVNAEDQNGDKNQFAQAMASLNKQINMFYVLNEITNKEHNLPTKYGAYSDQLKKVINENFEKIENKKKEIEEKQNKEFQENKNGASNNQDTKQDAQKGDTNTQSTELKARQAQQVQKDQQNDSKGNTATNSDTGKSDNKTDTTEDEQNTYKPLTAREKKTKIKELTKDIFFSTAQNYLFLVQGGYNNKLFAGGLPELHQRFLSDVVVDFSEEKLVYEVQGEPIVSSVATIVITLFLTVVLLAIAFFFFKYRNVK.

A run of 5 helical transmembrane segments spans residues 2-22, 33-53, 79-99, 116-136, and 143-163; these read FVLLMLALVMLFIVQSSTNVI, SLILIPLVTLLAGSITADIFI, LLVLLMYLSIVAVLSTAVVSL, LSIFVGTILNGIIFSAVTIML, and IQSLIILLLFVSLFSFSSPIA. 2 disordered regions span residues 385–461 and 571–651; these read DNKG…KKKE and NKEF…PLTA. A compositionally biased stretch (basic and acidic residues) spans 398–411; that stretch reads ENTKGDDNSSEKTD. Residues 412-424 are compositionally biased toward polar residues; that stretch reads TVSVSTKLKTTAD. The span at 425 to 436 shows a compositional bias: low complexity; that stretch reads QSESTQMSSEST. Polar residues predominate over residues 437–451; that stretch reads ATGISSDPQSQGKMN. Residues 452-461 are compositionally biased toward basic and acidic residues; the sequence is NKSEEQKKKE. Residues 618-629 are compositionally biased toward polar residues; it reads DSKGNTATNSDT. A helical transmembrane segment spans residues 724–744; sequence ATIVITLFLTVVLLAIAFFFF.

This sequence to M.pneumoniae MPN_335.

The protein resides in the cell membrane. This is an uncharacterized protein from Mycoplasma pneumoniae (strain ATCC 29342 / M129 / Subtype 1) (Mycoplasmoides pneumoniae).